A 509-amino-acid polypeptide reads, in one-letter code: Maturase K (509 aa).

This sequence belongs to the intron maturase 2 family. MatK subfamily.

The protein localises to the plastid. The protein resides in the chloroplast. Its function is as follows. Usually encoded in the trnK tRNA gene intron. Probably assists in splicing its own and other chloroplast group II introns. This Pereskia aculeata (Barbados gooseberry) protein is Maturase K.